The primary structure comprises 181 residues: TATA-box-binding protein (181 aa).

Tandem repeats lie at residues 8–84 (IENI…VDLM) and 99–175 (IQNI…YDRL).

The protein belongs to the TBP family.

General factor that plays a role in the activation of archaeal genes transcribed by RNA polymerase. Binds specifically to the TATA box promoter element which lies close to the position of transcription initiation. This Methanobrevibacter smithii (strain ATCC 35061 / DSM 861 / OCM 144 / PS) protein is TATA-box-binding protein.